We begin with the raw amino-acid sequence, 506 residues long: Phenylacetaldehyde synthase (506 aa).

3 residues coordinate L-phenylalanine: Pro101, His202, and His317. Lys318 carries the post-translational modification N6-(pyridoxal phosphate)lysine.

The protein belongs to the group II decarboxylase family. Homotetramer. It depends on pyridoxal 5'-phosphate as a cofactor. Highly expressed in corolla limbs and at lower levels in corolla tubes and ovaries.

It carries out the reaction L-phenylalanine + O2 + H2O + H(+) = 2-phenylacetaldehyde + H2O2 + NH4(+) + CO2. Its function is as follows. Bifunctional enzyme that catalyzes the decarboxylation of L-phenylalanine to 2-phenylethylamine, which is then oxidized to form 2-phenylacetaldehyde, a constituent of floral scent. 2-phenylacetaldehyde is a precursor of 2-phenylethanol, another constituent of floral scent. The sequence is that of Phenylacetaldehyde synthase from Petunia hybrida (Petunia).